A 239-amino-acid chain; its full sequence is MILYPAIDLKDGQCVRLLRGEMEAATVFGDDPAAQAAAFEAAGCEWLHLVDLNGAFAGHPVNGAAVEAILARLTVPAQLGGGIRDMKTIALWLEKGLARVILGTVAVENPALVREAARAFPGRVAVGIDARKGRVATKGWATETDVMATDLARSFEDAGVAALIYTDIDRDGAMAGPNIEATDALARAVSIPVIASGGVSSLADLVALRDTGRIAGAISGRALYDGALDLAEALRTLRA.

The active-site Proton acceptor is Asp8. Asp129 functions as the Proton donor in the catalytic mechanism.

The protein belongs to the HisA/HisF family.

The protein localises to the cytoplasm. It catalyses the reaction 1-(5-phospho-beta-D-ribosyl)-5-[(5-phospho-beta-D-ribosylamino)methylideneamino]imidazole-4-carboxamide = 5-[(5-phospho-1-deoxy-D-ribulos-1-ylimino)methylamino]-1-(5-phospho-beta-D-ribosyl)imidazole-4-carboxamide. It participates in amino-acid biosynthesis; L-histidine biosynthesis; L-histidine from 5-phospho-alpha-D-ribose 1-diphosphate: step 4/9. In Cereibacter sphaeroides (strain ATCC 17025 / ATH 2.4.3) (Rhodobacter sphaeroides), this protein is 1-(5-phosphoribosyl)-5-[(5-phosphoribosylamino)methylideneamino] imidazole-4-carboxamide isomerase.